Here is a 1547-residue protein sequence, read N- to C-terminus: Fatty acid synthase subunit alpha (1547 aa).

The disordered stretch occupies residues T94–A121. Residues E109–H118 show a composition bias toward polar residues. Positions L145–R221 constitute a Carrier domain. At S180 the chain carries O-(pantetheine 4'-phosphoryl)serine. Residues G563–T798 are ketoreductase (KR) domain. The region spanning K1004 to H1476 is the Ketosynthase family 3 (KS3) domain. Residues C1190 and H1442 each act as for beta-ketoacyl synthase activity in the active site.

This sequence belongs to the thiolase-like superfamily. Fungal fatty acid synthetase subunit alpha family. It depends on pantetheine 4'-phosphate as a cofactor.

It carries out the reaction acetyl-CoA + n malonyl-CoA + 2n NADPH + 4n H(+) = a long-chain-acyl-CoA + n CoA + n CO2 + 2n NADP(+).. It catalyses the reaction a fatty acyl-[ACP] + malonyl-[ACP] + H(+) = a 3-oxoacyl-[ACP] + holo-[ACP] + CO2. The catalysed reaction is a (3R)-hydroxyacyl-[ACP] + NADP(+) = a 3-oxoacyl-[ACP] + NADPH + H(+). The protein operates within mycotoxin biosynthesis; HC-toxin biosynthesis. Functionally, fatty acid synthase alpha subunit, part of the diffuse TOX2 gene cluster that mediates the biosynthesis of the HC-toxin, cyclic tetrapeptide of structure cyclo(D-Pro-L-Ala-D-Ala-L-Aeo), where Aeo stands for 2-amino-9,10-epoxi-8-oxodecanoic acid. HC-toxin is a determinant of specificity and virulence in the interaction between the producing fungus and its host, maize. TOXH contribute to the synthesis of the decanoic backbone of 2-amino-9,10-epoxi-8-oxodecanoic acid, an essential precursor for the production of the major forms of HC-toxin by the non-ribosomal peptide synthetase HTS1. This is Fatty acid synthase subunit alpha from Cochliobolus carbonum (Maize leaf spot fungus).